A 289-amino-acid chain; its full sequence is Acetyl-coenzyme A carboxylase carboxyl transferase subunit beta (289 aa).

Residues 30–289 (IWRECPRCHS…SNAWRANHDK (260 aa)) form the CoA carboxyltransferase N-terminal domain. Zn(2+) is bound by residues C34, C37, C52, and C55. The C4-type zinc-finger motif lies at 34–55 (CPRCHSRFYYRRFGNFDVCPEC).

This sequence belongs to the AccD/PCCB family. As to quaternary structure, acetyl-CoA carboxylase is a heterohexamer composed of biotin carboxyl carrier protein (AccB), biotin carboxylase (AccC) and two subunits each of ACCase subunit alpha (AccA) and ACCase subunit beta (AccD). It depends on Zn(2+) as a cofactor.

The protein resides in the cytoplasm. The enzyme catalyses N(6)-carboxybiotinyl-L-lysyl-[protein] + acetyl-CoA = N(6)-biotinyl-L-lysyl-[protein] + malonyl-CoA. The protein operates within lipid metabolism; malonyl-CoA biosynthesis; malonyl-CoA from acetyl-CoA: step 1/1. In terms of biological role, component of the acetyl coenzyme A carboxylase (ACC) complex. Biotin carboxylase (BC) catalyzes the carboxylation of biotin on its carrier protein (BCCP) and then the CO(2) group is transferred by the transcarboxylase to acetyl-CoA to form malonyl-CoA. The protein is Acetyl-coenzyme A carboxylase carboxyl transferase subunit beta of Oenococcus oeni (strain ATCC BAA-331 / PSU-1).